The sequence spans 329 residues: tRNA N6-adenosine threonylcarbamoyltransferase (329 aa).

Fe cation-binding residues include His108, His112, and Tyr129. Substrate contacts are provided by residues 129–133, Asp161, Glu182, and Ser261; that span reads YVSGG. Asp289 provides a ligand contact to Fe cation.

The protein belongs to the KAE1 / TsaD family. Requires Fe(2+) as cofactor.

The protein resides in the cytoplasm. It carries out the reaction L-threonylcarbamoyladenylate + adenosine(37) in tRNA = N(6)-L-threonylcarbamoyladenosine(37) in tRNA + AMP + H(+). Its function is as follows. Required for the formation of a threonylcarbamoyl group on adenosine at position 37 (t(6)A37) in tRNAs that read codons beginning with adenine. Is probably involved in the transfer of the threonylcarbamoyl moiety of threonylcarbamoyl-AMP (TC-AMP) to the N6 group of A37. The protein is tRNA N6-adenosine threonylcarbamoyltransferase of Ignicoccus hospitalis (strain KIN4/I / DSM 18386 / JCM 14125).